The chain runs to 306 residues: tRNA pseudouridine synthase B (306 aa).

The Nucleophile role is filled by aspartate 48.

Belongs to the pseudouridine synthase TruB family. Type 1 subfamily.

It carries out the reaction uridine(55) in tRNA = pseudouridine(55) in tRNA. Functionally, responsible for synthesis of pseudouridine from uracil-55 in the psi GC loop of transfer RNAs. The polypeptide is tRNA pseudouridine synthase B (Haemophilus influenzae (strain PittEE)).